The chain runs to 1076 residues: Nuclear factor of activated T-cells, cytoplasmic 3 (1076 aa).

Thr-2 is modified (N-acetylthreonine). The calcineurin-binding stretch occupies residues 110 to 115 (PSIQIT). A disordered region spans residues 206–307 (LGSPLTSPGG…PGHSPRGSVT (102 aa)). 2 tandem repeats follow at residues 208–224 (SPLT…PGEE) and 237–253 (SPRQ…ITDE). Residues 208–309 (SPLTSPGGSP…HSPRGSVTED (102 aa)) are 3 X SP repeats. Over residues 237–254 (SPRQSPCHSPRSSITDEN) the composition is skewed to polar residues. Over residues 257–271 (SPRPASGPSSRPTSP) the composition is skewed to low complexity. Positions 274-276 (KRR) match the Nuclear localization signal motif. Residues 293-309 (SPVPSPGHSPRGSVTED) form repeat 3. At Ser-345 the chain carries Phosphoserine. The interval 359–390 (CSDDQGSLSPSRETSVDDGLGSQYPLKKDSSG) is disordered. Polar residues predominate over residues 362-371 (DQGSLSPSRE). Position 373 is a phosphoserine (Ser-373). In terms of domain architecture, RHD spans 416–597 (SSLPPLDWPL…IPVECSQRSA (182 aa)). Residues 445-452 (RAHYETEG) mediate DNA binding. The short motif at 687-689 (KRK) is the Nuclear localization signal element. Disordered regions lie at residues 700–744 (PVLM…ALSA) and 863–987 (GHLL…GGLS). A compositionally biased stretch (low complexity) spans 713–722 (LSSVPSLPVP). Composition is skewed to polar residues over residues 724-734 (SAQTQRPSSDT) and 888-911 (SAGQ…SHLQ). 2 stretches are compositionally biased toward low complexity: residues 917-939 (PSHP…SSPI) and 946-965 (QLQS…SPSP). Residues 970–981 (HSGQHSTQAQST) show a composition bias toward polar residues. The short motif at 1032–1041 (TLDDVNEIIG) is the Nuclear export signal element. A disordered region spans residues 1049–1076 (VSQGPEVIRDAPLPGPESPDVMSSNSAQ). The residue at position 1066 (Ser-1066) is a Phosphoserine.

In terms of assembly, NFATC proteins bind to DNA as monomers. Member of the multicomponent NFATC transcription complex that consists of at least two components, a pre-existing cytoplasmic component NFATC2 and an inducible nuclear component NFATC1. Other members such as NFATC4, or members of the activating protein-1 family, MAF, GATA4 and Cbp/p300 can also bind the complex. Component of a promoter-binding complex composed of STAT3, NFATC3 and NFATC4; complex formation is enhanced by calcineurin. Interacts with TRIM17; this interaction prevents NFATC3 nuclear localization. Interacts with and ubiquitinated by STUB1/CHIP; HSPA1A/HSP70 is required as a co-chaperone. In terms of processing, phosphorylated by NFATC-kinase; dephosphorylated by calcineurin. Ubiquitinated by STUB1/CHIP, leading to proteasomal degradation. As to expression, expressed in cardiomyocytes (at protein level).

Its subcellular location is the cytoplasm. It localises to the nucleus. Acts as a regulator of transcriptional activation. Binds to the TNFSF11/RANKL promoter region and promotes TNFSF11 transcription. Binding to the TNFSF11 promoter region is increased by high levels of Ca(2+) which induce NFATC3 expression and may lead to regulation of TNFSF11 expression in osteoblasts. Plays a role in promoting mesenteric arterial wall remodeling in response to the intermittent hypoxia-induced increase in EDN1 and ROCK signaling. As a result NFATC3 colocalizes with F-actin filaments, translocates to the nucleus and promotes transcription of the smooth muscle hypertrophy and differentiation marker ACTA2. Promotes lipopolysaccharide-induced apoptosis and hypertrophy in cardiomyocytes. Following JAK/STAT signaling activation and as part of a complex with NFATC4 and STAT3, binds to the alpha-beta E4 promoter region of CRYAB and activates transcription in cardiomyocytes. In conjunction with NFATC4, involved in embryonic heart development via maintenance of cardiomyocyte survival, proliferation and differentiation. Plays a role in the inducible expression of cytokine genes in T-cells, especially in the induction of the IL-2. Required for thymocyte maturation during DN3 to DN4 transition and during positive selection. Positively regulates macrophage-derived polymicrobial clearance, via binding to the promoter region and promoting transcription of NOS2 resulting in subsequent generation of nitric oxide. Involved in Ca(2+)-mediated transcriptional responses upon Ca(2+) influx via ORAI1 CRAC channels. This chain is Nuclear factor of activated T-cells, cytoplasmic 3, found in Rattus norvegicus (Rat).